The following is a 502-amino-acid chain: Mannitol 2-dehydrogenase (502 aa).

NAD(+) is bound at residue 35–46; sequence IVHVGVGGFHRA.

The protein belongs to the mannitol dehydrogenase family. As to quaternary structure, monomer.

It carries out the reaction D-mannitol + NAD(+) = D-fructose + NADH + H(+). Functionally, catalyzes the NAD(H)-dependent interconversion of D-fructose and D-mannitol in the mannitol metabolic pathway. The polypeptide is Mannitol 2-dehydrogenase (Pyricularia oryzae (strain 70-15 / ATCC MYA-4617 / FGSC 8958) (Rice blast fungus)).